We begin with the raw amino-acid sequence, 76 residues long: Large ribosomal subunit protein eL20 (76 aa).

Belongs to the eukaryotic ribosomal protein eL20 family. As to quaternary structure, part of the 50S ribosomal subunit. Binds 23S rRNA.

The sequence is that of Large ribosomal subunit protein eL20 from Methanococcus maripaludis (strain C6 / ATCC BAA-1332).